The primary structure comprises 267 residues: Beta-lactamase OXA-5 (267 aa).

An N-terminal signal peptide occupies residues M1 to S19. The active-site Acyl-ester intermediate is S67. At K70 the chain carries N6-carboxylysine. Substrate is bound at residue K205 to G207.

It belongs to the class-D beta-lactamase family.

It catalyses the reaction a beta-lactam + H2O = a substituted beta-amino acid. Inhibited by clavulanic acid. In terms of biological role, hydrolyzes both oxacillin and methicillin. This chain is Beta-lactamase OXA-5 (bla), found in Pseudomonas aeruginosa.